A 39-amino-acid polypeptide reads, in one-letter code: SGSKTATKGDGCFGVRIDRIGSTSGMGCGGVPKPTPGGS.

A propeptide spanning residues 1–8 (SGSKTATK) is cleaved from the precursor. Cysteines 12 and 28 form a disulfide. Residues 20-39 (IGSTSGMGCGGVPKPTPGGS) are disordered.

This sequence belongs to the natriuretic peptide family. As to expression, expressed by the venom gland.

It is found in the secreted. Its function is as follows. Snake venom natriuretic peptide that targets both NPR1 and NPR2. Exhibits hypotensive and vasodepressor activities. The sequence is that of Natriuretic peptide CnNP-b from Cryptophis nigrescens (Eastern small-eyed snake).